The chain runs to 502 residues: MMAFLEFSNISKGYPGVQALANVSFTVEKGAVHGLMGENGAGKSTLIRVLSGDQAADAGNILIDGEEQKYGSVRDAFHAGVIVIHQELQLVPELTVAENLWLGRFPAKGGVIHSKTLIETVRSKLEEIGIDIDPSAKVASLSIGARQMVEIAKAVMLDARVIALDEPTSSLSSRESEILFSLIDRLKAKGTVILYVSHRLDEIFRLCDSLTVLRDGKLAAHHPQIAETTREQIISEMVGREISNVWGWRERPLGGIRLEVNGLSGPRLRHPISFSVRQGEILGFFGLIGAGRSEMARLLYGADARHQGQVTIDGVAVSPNNPKAAINAGMVLCPEDRKFDGIVQGRSIEENIAISSRRHFSPFGILSPRQEAALADRFIAKLRVRTPSRKQDIINLSGGNQQKVILGRWLSEQGIKVLVIDEPTRGIDVGAKSEIYEILYELAAGGMAIVVISSELPEVMGISDRIMVMCQGRVAANVARPDFDERSILTAALPDKNAAGTL.

2 ABC transporter domains span residues L5–R240 and L253–K496. G37 to S44 serves as a coordination point for ATP.

Belongs to the ABC transporter superfamily. Arabinose importer (TC 3.A.1.2.2) family. The complex is composed of two ATP-binding proteins (AraG), two transmembrane proteins (AraH) and a solute-binding protein (AraF).

The protein resides in the cell inner membrane. It carries out the reaction L-arabinose(out) + ATP + H2O = L-arabinose(in) + ADP + phosphate + H(+). In terms of biological role, part of the ABC transporter complex AraFGH involved in arabinose import. Responsible for energy coupling to the transport system. This is Arabinose import ATP-binding protein AraG from Rhizobium johnstonii (strain DSM 114642 / LMG 32736 / 3841) (Rhizobium leguminosarum bv. viciae).